Here is a 387-residue protein sequence, read N- to C-terminus: Eukaryotic translation initiation factor 3 subunit M (387 aa).

One can recognise a PCI domain in the interval 181–340 (LSSKVMIELL…RKVHISSTMH (160 aa)).

The protein belongs to the eIF-3 subunit M family. As to quaternary structure, component of the eukaryotic translation initiation factor 3 (eIF-3) complex. The eIF-3 complex interacts with pix.

The protein localises to the cytoplasm. It localises to the golgi apparatus. Its function is as follows. Component of the eukaryotic translation initiation factor 3 (eIF-3) complex, which is involved in protein synthesis of a specialized repertoire of mRNAs and, together with other initiation factors, stimulates binding of mRNA and methionyl-tRNAi to the 40S ribosome. The eIF-3 complex specifically targets and initiates translation of a subset of mRNAs involved in cell proliferation. This chain is Eukaryotic translation initiation factor 3 subunit M, found in Drosophila pseudoobscura pseudoobscura (Fruit fly).